Here is a 326-residue protein sequence, read N- to C-terminus: MSFNAFASSLSKKLQEISTSVSEKTQELPSLAQSTQRMVQERLGQVTDISQLPREYTELEDKVDTIKLIYNHFLGVTAIYENGSYDYPKYINESVNEFSRSVASKLTELTHATSASEAQNILVAPGPIKEPKTLNYALSKVALNSSECLNKMFPTEEQPLASALLQFSDVQAKIAQARIQQDTLIQTKFNKNLRERLSFEIGKADKCRKDVHSMRLRYDVARTNLANNKKPEKEASLRVQMETLEDQFAQVTEDATVCLQEVISHANFSEDLKELAKAQAEYFETSAGLMKEFLSNSFAEEPEAKPEVAEEEKPQTAISMNDEDDA.

N-acetylserine is present on Ser-2. Ser-2 carries the phosphoserine modification. Glycyl lysine isopeptide (Lys-Gly) (interchain with G-Cter in ubiquitin) cross-links involve residues Lys-13, Lys-305, and Lys-313. The segment at 299–326 is disordered; the sequence is AEEPEAKPEVAEEEKPQTAISMNDEDDA. Residues 302–314 are compositionally biased toward basic and acidic residues; the sequence is PEAKPEVAEEEKP. Ser-319 carries the phosphoserine modification.

It is found in the golgi apparatus membrane. In Saccharomyces cerevisiae (strain ATCC 204508 / S288c) (Baker's yeast), this protein is Protein GVP36 (GVP36).